We begin with the raw amino-acid sequence, 390 residues long: Neuromedin-B receptor (390 aa).

Positions 1-19 (MPSKSLSNLSVTTGANESG) are enriched in polar residues. The interval 1 to 22 (MPSKSLSNLSVTTGANESGSVP) is disordered. Residues 1 to 41 (MPSKSLSNLSVTTGANESGSVPEGWERDFLPASDGTTTELV) lie on the Extracellular side of the membrane. N-linked (GlcNAc...) asparagine glycosylation is found at N8 and N16. Residues 42-65 (IRCVIPSLYLLIITVGLLGNIMLV) form a helical membrane-spanning segment. The Cytoplasmic segment spans residues 66 to 79 (KIFITNSAMRSVPN). The chain crosses the membrane as a helical span at residues 80–99 (IFISNLAAGDLLLLLTCVPV). Residues 100–117 (DASRYFFDEWMFGKVGCK) lie on the Extracellular side of the membrane. A disulfide bond links C116 and C198. Residues 118–139 (LIPVIQLTSVGVSVFTLTALSA) form a helical membrane-spanning segment. Topologically, residues 140–156 (DRYRAIVNPMDMQTSGA) are cytoplasmic. A helical membrane pass occupies residues 157–177 (LLRTCVKAMGIWVVSVLLAVP). At 178–211 (EAVFSEVARISSLDNSSFTACIPYPQTDELHPKI) the chain is on the extracellular side. N192 carries an N-linked (GlcNAc...) asparagine glycan. A helical membrane pass occupies residues 212-235 (HSVLIFLVYFLIPLAIISIYYYHI). Topologically, residues 236 to 266 (AKTLIKSAHNLPGEYNEHTKKQMETRKRLAK) are cytoplasmic. The helical transmembrane segment at 267-287 (IVLVFVGCFIFCWFPNHILYM) threads the bilayer. Over 288 to 299 (YRSFNYNEIDPS) the chain is Extracellular. Residues 300-327 (LGHMIVTLVARVLSFGNSCVNPFALYLL) form a helical membrane-spanning segment. Residues 328-390 (SESFRRHFNS…GHSMKQEMAL (63 aa)) lie on the Cytoplasmic side of the membrane. C341 carries S-palmitoyl cysteine lipidation. S352 carries the phosphoserine modification.

This sequence belongs to the G-protein coupled receptor 1 family. In terms of tissue distribution, expressed in epididymis (at protein level).

It localises to the cell membrane. Its function is as follows. Receptor for neuromedin-B. Contributes to the maintenance of basal sigh rate through signaling in the pre-Botzinger complex, a cluster of several thousand neurons in the ventrolateral medulla responsible for inspiration during respiratory activity. Contributes to the induction of sneezing following exposure to chemical irritants or allergens which causes release of NMB by nasal sensory neurons and activation of NMBR-expressing neurons in the sneeze-evoking region of the brainstem. These in turn activate neurons of the caudal ventral respiratory group, giving rise to the sneezing response. Contributes to induction of acute itch, possibly through its activation on dorsal root ganglion neurons by the NMB peptide. Plays a role in the innate immune response to influenza A virus infection by enhancing interferon alpha expression and reducing expression of IL6. Plays a role in CSF1-induced proliferation of osteoclast precursors by contributing to the positive regulation of the expression of the CSF1 receptor CSF1R. In Homo sapiens (Human), this protein is Neuromedin-B receptor (NMBR).